Reading from the N-terminus, the 152-residue chain is Small ribosomal subunit protein uS13 (152 aa).

It belongs to the universal ribosomal protein uS13 family. As to quaternary structure, component of the small ribosomal subunit.

The protein localises to the cytoplasm. Functionally, component of the small ribosomal subunit. The ribosome is a large ribonucleoprotein complex responsible for the synthesis of proteins in the cell. The polypeptide is Small ribosomal subunit protein uS13 (rps18) (Ictalurus punctatus (Channel catfish)).